The sequence spans 642 residues: MSEKVGAMGGNKGGAFDDGVFDGVKKVIVGKDFNNVTYIKVEYEKDGKFEIREHGTNRGQLKEFSVDYPNEYITAVGGSYDTVFGYGSALIKSLLFKTSYGRTSPILGHTTLLGNPAGKEFMLESKYGGKLLGFHGRSGEALDAIGPHFFAVNSSLKHFKPQGGNGGSAWDDGAFDGVRKVLVGRNGKFVSYVRFEYAKGERMVPHAHGKRQEAPQEFVVDYPNEHITSVEGTIDGYLSSLKFTTSKGRTSPVFGNVVGSKFVFEETSFKLVGFCGRSGEAIDALGAHFAPLPAPTPAPAPAPAPAPAPAPSPAPASAPVPAPAPTPAPAPAPPNKVEALGGNGGTIFDDGAFDHVRKVYIGQGDSGVAYVKFEYRKDGKRETREHGKMTVLGTEEFEVESDDYITSIEVSVDNVFGFKSEIVTSLVFKTFKGITSQPFGMETEKKLELKDGKGGKLVGFHGKASDVLYALGAYFAPTTNSTTPSTPSTSKKLQARGGNGGASWDDGVFDGVRKILVGQGNDGVAFVTFEYNKGSQAILGDRHGKQTLLGTETFELDYPSEYITSVEGYYDKIFGVEAEVVTSLTFKTNKRTSQPFGMTAGEHFELNEDGYKIVGFHGKAGDLVHQIGVHAVPIFTNYRCVF.

Jacalin-type lectin domains follow at residues 2–151, 156–291, 334–477, and 490–633; these read SEKV…HFFA, LKHF…HFAP, PNKV…YFAP, and SKKL…HAVP. Positions 296-334 are enriched in pro residues; that stretch reads TPAPAPAPAPAPAPAPSPAPASAPVPAPAPTPAPAPAPP. 2 disordered regions span residues 296–338 and 479–499; these read TPAP…NKVE and TNST…RGGN. The span at 479–490 shows a compositional bias: low complexity; sequence TNSTTPSTPSTS.

Belongs to the jacalin lectin family. Expressed in flowers. Detected mainly in ovules and styles of immature flowers, but also in pistils, styles, stamens, petals and embryos. Not detected in leaves.

The chain is Myrosinase-binding protein 2 (F-ATMBP) from Arabidopsis thaliana (Mouse-ear cress).